The following is a 228-amino-acid chain: 2,3-bisphosphoglycerate-dependent phosphoglycerate mutase (228 aa).

Substrate is bound by residues 8-15 (RHGQSVWN), 21-22 (TG), R60, 87-90 (ERHY), K98, 114-115 (RR), and 183-184 (GN). H9 acts as the Tele-phosphohistidine intermediate in catalysis. Catalysis depends on E87, which acts as the Proton donor/acceptor.

This sequence belongs to the phosphoglycerate mutase family. BPG-dependent PGAM subfamily. As to quaternary structure, homodimer.

It carries out the reaction (2R)-2-phosphoglycerate = (2R)-3-phosphoglycerate. The protein operates within carbohydrate degradation; glycolysis; pyruvate from D-glyceraldehyde 3-phosphate: step 3/5. Its function is as follows. Catalyzes the interconversion of 2-phosphoglycerate and 3-phosphoglycerate. This is 2,3-bisphosphoglycerate-dependent phosphoglycerate mutase from Rhodospirillum centenum (strain ATCC 51521 / SW).